Here is a 328-residue protein sequence, read N- to C-terminus: D-cysteine desulfhydrase (328 aa).

At Lys-51 the chain carries N6-(pyridoxal phosphate)lysine.

Belongs to the ACC deaminase/D-cysteine desulfhydrase family. As to quaternary structure, homodimer. The cofactor is pyridoxal 5'-phosphate.

The catalysed reaction is D-cysteine + H2O = hydrogen sulfide + pyruvate + NH4(+) + H(+). In terms of biological role, catalyzes the alpha,beta-elimination reaction of D-cysteine and of several D-cysteine derivatives. It could be a defense mechanism against D-cysteine. This Salmonella choleraesuis (strain SC-B67) protein is D-cysteine desulfhydrase.